A 337-amino-acid polypeptide reads, in one-letter code: uncharacterized protein (337 aa).

29 to 36 (GPKSSGKS) is an ATP binding site.

The protein belongs to the archaeal ATPase family.

This is an uncharacterized protein from Methanocaldococcus jannaschii (strain ATCC 43067 / DSM 2661 / JAL-1 / JCM 10045 / NBRC 100440) (Methanococcus jannaschii).